A 577-amino-acid polypeptide reads, in one-letter code: 5'-AMP-activated protein kinase subunit gamma (577 aa).

Positions 45 to 226 (QSEGVGGGEL…NNNNSNSNNN (182 aa)) are disordered. A compositionally biased stretch (low complexity) spans 58 to 88 (NNNTTNNNTPTNTTTTTNTNTTTMNNSNNNN). Composition is skewed to polar residues over residues 106–121 (SIEQPSPSFISSSQDG) and 138–155 (ESQSPPNGDNQILNNNNM). Residues 165-226 (STDNKSSTNT…NNNNSNSNNN (62 aa)) are compositionally biased toward low complexity. 4 CBS domains span residues 279-341 (VIPI…KKPK), 364-426 (ERPS…QLPE), 438-499 (IGTF…LSPS), and 517-574 (QRPE…DVKS).

This sequence belongs to the 5'-AMP-activated protein kinase gamma subunit family.

In terms of biological role, AMPK may be responsible for the regulation of fatty acid synthesis by phosphorylation of acetyl-CoA carboxylase. This is 5'-AMP-activated protein kinase subunit gamma (prkag) from Dictyostelium discoideum (Social amoeba).